Reading from the N-terminus, the 160-residue chain is Transcription elongation factor GreA (160 aa).

A coiled-coil region spans residues 12–76 (EGVKKLEEEL…QLENMLKNAS (65 aa)).

Belongs to the GreA/GreB family.

Necessary for efficient RNA polymerase transcription elongation past template-encoded arresting sites. The arresting sites in DNA have the property of trapping a certain fraction of elongating RNA polymerases that pass through, resulting in locked ternary complexes. Cleavage of the nascent transcript by cleavage factors such as GreA or GreB allows the resumption of elongation from the new 3'terminus. GreA releases sequences of 2 to 3 nucleotides. This chain is Transcription elongation factor GreA, found in Clostridium botulinum (strain Hall / ATCC 3502 / NCTC 13319 / Type A).